The sequence spans 233 residues: Uridylate kinase (233 aa).

Residues 8–11, Gly-51, and Arg-55 contribute to the ATP site; that span reads KLSG. Residues Asp-68 and 129-136 contribute to the UMP site; that span reads TSNPFFTT. Positions 156, 162, and 165 each coordinate ATP.

Belongs to the UMP kinase family. In terms of assembly, homohexamer.

Its subcellular location is the cytoplasm. It catalyses the reaction UMP + ATP = UDP + ADP. It functions in the pathway pyrimidine metabolism; CTP biosynthesis via de novo pathway; UDP from UMP (UMPK route): step 1/1. With respect to regulation, inhibited by UTP. Functionally, catalyzes the reversible phosphorylation of UMP to UDP. This is Uridylate kinase from Thermosipho melanesiensis (strain DSM 12029 / CIP 104789 / BI429).